We begin with the raw amino-acid sequence, 288 residues long: Acetyl-coenzyme A carboxylase carboxyl transferase subunit beta (288 aa).

In terms of domain architecture, CoA carboxyltransferase N-terminal spans Leu34–Gln288. Positions 38, 41, 56, and 59 each coordinate Zn(2+). Residues Cys38 to Cys59 form a C4-type zinc finger.

This sequence belongs to the AccD/PCCB family. As to quaternary structure, acetyl-CoA carboxylase is a heterohexamer composed of biotin carboxyl carrier protein (AccB), biotin carboxylase (AccC) and two subunits each of ACCase subunit alpha (AccA) and ACCase subunit beta (AccD). The cofactor is Zn(2+).

The protein localises to the cytoplasm. It catalyses the reaction N(6)-carboxybiotinyl-L-lysyl-[protein] + acetyl-CoA = N(6)-biotinyl-L-lysyl-[protein] + malonyl-CoA. It functions in the pathway lipid metabolism; malonyl-CoA biosynthesis; malonyl-CoA from acetyl-CoA: step 1/1. Functionally, component of the acetyl coenzyme A carboxylase (ACC) complex. Biotin carboxylase (BC) catalyzes the carboxylation of biotin on its carrier protein (BCCP) and then the CO(2) group is transferred by the transcarboxylase to acetyl-CoA to form malonyl-CoA. This is Acetyl-coenzyme A carboxylase carboxyl transferase subunit beta from Streptococcus pyogenes serotype M4 (strain MGAS10750).